The sequence spans 832 residues: SID1 transmembrane family member 2 (832 aa).

Positions 1-18 (MIAWRLPLCVLLVASVES) are cleaved as a signal peptide. The Extracellular portion of the chain corresponds to 19–293 (HLGALGPKNV…VSQAVTSEAY (275 aa)). Residues N27, N54, N60, N123, N141, and N165 are each glycosylated (N-linked (GlcNAc...) asparagine). The helical transmembrane segment at 294-314 (VGGMLFCLGIFLSFYLLTVLL) threads the bilayer. The Cytoplasmic segment spans residues 315–447 (ACWENWRQRK…DKRVLRKKYQ (133 aa)). A phosphoserine mark is found at S401, S403, and S404. The chain crosses the membrane as a helical span at residues 448–468 (IYFWNIATIAVFYALPVVQLV). The Extracellular segment spans residues 469 to 499 (ITYQTVVNVTGNQDICYYNFLCAHPLGNLSA). Residues N476 and N496 are each glycosylated (N-linked (GlcNAc...) asparagine). A helical membrane pass occupies residues 500 to 520 (FNNILSNLGYILLGLLFLLII). The Cytoplasmic segment spans residues 521–546 (LQREINHNRALLRNDLYALECGIPKH). The helical transmembrane segment at 547–567 (FGLFYAMGTALMMEGLLSACY) threads the bilayer. Over 568-605 (HVCPNYTNFQFDTSFMYMIAGLCMLKLYQKRHPDINAS) the chain is Extracellular. N-linked (GlcNAc...) asparagine glycans are attached at residues N572 and N603. Residues 606–626 (AYSAYACLAIVIFFSVLGVVF) traverse the membrane as a helical segment. Residues 627–631 (GKGNT) are Cytoplasmic-facing. A helical membrane pass occupies residues 632-652 (AFWIVFSVIHIISTLLLSTQL). Over 653-688 (YYMGRWKLDSGIFRRILHVLYTDCIRQCSGPLYTDR) the chain is Extracellular. The chain crosses the membrane as a helical span at residues 689–709 (MVLLVMGNIINWSLAAYGLIM). Residues 710–715 (RPNDFA) lie on the Cytoplasmic side of the membrane. Residues 716 to 736 (SYLLAIGICNLLLYFAFYIIM) traverse the membrane as a helical segment. Residues 737–746 (KLRSGERIKL) are Extracellular-facing. The chain crosses the membrane as a helical span at residues 747–767 (IPLLCIVCTSVVWGFALFFFF). At 768 to 796 (QGLSTWQKTPAESREHNRDCILLDFFDDH) the chain is on the cytoplasmic side. Residues 797-817 (DIWHFLSSIAMFGSFLVLLTL) form a helical membrane-spanning segment. At 818 to 832 (DDDLDTVQRDKIYVF) the chain is on the extracellular side.

This sequence belongs to the SID1 family. As to quaternary structure, interacts with adapter protein complex 1 (AP-1) and AP-2, but not AP-3 and AP-4. Interacts with LAMP2. Glycosylated. In terms of tissue distribution, widely expressed, including in the liver, brain and kidney (at protein level).

Its subcellular location is the lysosome membrane. It is found in the cell membrane. In terms of biological role, mediates the translocation of RNA and DNA across the lysosomal membrane during RNA and DNA autophagy (RDA), a process in which RNA and DNA is directly imported into lysosomes in an ATP-dependent manner, and degraded. Involved in the uptake of single-stranded oligonucleotides by living cells, a process called gymnosis. In vitro, mediates the uptake of linear DNA more efficiently than that of circular DNA, but exhibits similar uptake efficacy toward RNA and DNA. Binds long double-stranded RNA (dsRNA) (500 - 700 base pairs), but not dsRNA shorter than 100 bp. This chain is SID1 transmembrane family member 2 (Sidt2), found in Mus musculus (Mouse).